The primary structure comprises 505 residues: AMP phosphorylase 2 (505 aa).

Residues Gly169, 195–200 (SRAITT), Thr204, Ser265, and Lys289 each bind AMP.

Belongs to the thymidine/pyrimidine-nucleoside phosphorylase family. Type 2 subfamily.

It carries out the reaction AMP + phosphate = alpha-D-ribose 1,5-bisphosphate + adenine. The enzyme catalyses CMP + phosphate = cytosine + alpha-D-ribose 1,5-bisphosphate. The catalysed reaction is UMP + phosphate = alpha-D-ribose 1,5-bisphosphate + uracil. Catalyzes the conversion of AMP and phosphate to adenine and ribose 1,5-bisphosphate (R15P). Exhibits phosphorylase activity toward CMP and UMP in addition to AMP. Functions in an archaeal AMP degradation pathway, together with R15P isomerase and RubisCO. This is AMP phosphorylase 2 from Archaeoglobus fulgidus (strain ATCC 49558 / DSM 4304 / JCM 9628 / NBRC 100126 / VC-16).